We begin with the raw amino-acid sequence, 781 residues long: Mitochondrial inner membrane m-AAA protease component paraplegin (781 aa).

The transit peptide at 1–43 (MAAALLLLRALRQSPEPGPWRLWAQLSGRSPGLFSGAGGRRPY) directs the protein to the mitochondrion. Positions 44-105 (VVRGTPIGLA…GSTLYFNTSG (62 aa)) are cleaved as a propeptide — removed in mature form. Residues 105–134 (GLKQKNKDDDKPKGKAPEDDEEERRRKERE) are disordered. The Mitochondrial matrix portion of the chain corresponds to 106 to 144 (LKQKNKDDDKPKGKAPEDDEEERRRKEREDQMYRERLRT). Residues 109–134 (KNKDDDKPKGKAPEDDEEERRRKERE) show a composition bias toward basic and acidic residues. A helical transmembrane segment spans residues 145 to 165 (LFIIAIVMSLLNSLSTSGGSI). Over 166–248 (SWADFVNEML…DRIPVSYKRT (83 aa)) the chain is Mitochondrial intermembrane. A helical membrane pass occupies residues 249-269 (GFFGNALYALGMTAVGLAILW). The Mitochondrial matrix portion of the chain corresponds to 270-781 (YVFRLAGMTG…ASGEEEAPAP (512 aa)). ATP is bound by residues A312, G352, C353, G354, K355, T356, and L357. Residue Y505 is modified to 3'-nitrotyrosine. A Zn(2+)-binding site is contributed by H574. E575 is an active-site residue. H578 and D650 together coordinate Zn(2+). An interaction with PPIF region spans residues 701-781 (HEARLLVARA…ASGEEEAPAP (81 aa)).

In the N-terminal section; belongs to the AAA ATPase family. This sequence in the C-terminal section; belongs to the peptidase M41 family. Forms heterooligomers with AFG3L2; the m-AAA protease is composed of heterohexamers of AFG3L2 and SPG7. Component of the mitochondrial permeability transition pore complex (mPTPC), at least composed of SPG7, VDAC1 and PPIF. Interacts with MAIP1. Zn(2+) is required as a cofactor. Post-translationally, upon import into the mitochondrion, the N-terminal transit peptide is cleaved by the mitochondrial-processing peptidase (MPP) to generate an intermediate form which undergoes a second proteolytic cleavage mediated by proteases AFG3L2 removing an additional N-terminal fragment to generate the proteolytically active mature form.

Its subcellular location is the mitochondrion inner membrane. It catalyses the reaction ATP + H2O = ADP + phosphate + H(+). Catalytic component of the m-AAA protease, a protease that plays a key role in proteostasis of inner mitochondrial membrane proteins, and which is essential for axonal and neuron development. SPG7 possesses both ATPase and protease activities: the ATPase activity is required to unfold substrates, threading them into the internal proteolytic cavity for hydrolysis into small peptide fragments. The m-AAA protease exerts a dual role in the mitochondrial inner membrane: it mediates the processing of specific regulatory proteins and ensures protein quality control by degrading misfolded polypeptides. Mediates protein maturation of the mitochondrial ribosomal subunit MRPL32/bL32m by catalyzing the cleavage of the presequence of MRPL32/bL32m prior to assembly into the mitochondrial ribosome. Acts as a regulator of calcium in neurons by mediating degradation of SMDT1/EMRE before its assembly with the uniporter complex, limiting the availability of SMDT1/EMRE for MCU assembly and promoting efficient assembly of gatekeeper subunits with MCU. Also regulates mitochondrial calcium by catalyzing degradation of MCU. Plays a role in the formation and regulation of the mitochondrial permeability transition pore (mPTP) and its proteolytic activity is dispensable for this function. The protein is Mitochondrial inner membrane m-AAA protease component paraplegin (Spg7) of Rattus norvegicus (Rat).